A 192-amino-acid polypeptide reads, in one-letter code: Large ribosomal subunit protein bL25 (192 aa).

This sequence belongs to the bacterial ribosomal protein bL25 family. CTC subfamily. In terms of assembly, part of the 50S ribosomal subunit; part of the 5S rRNA/L5/L18/L25 subcomplex. Contacts the 5S rRNA. Binds to the 5S rRNA independently of L5 and L18.

Its function is as follows. This is one of the proteins that binds to the 5S RNA in the ribosome where it forms part of the central protuberance. This Marinomonas sp. (strain MWYL1) protein is Large ribosomal subunit protein bL25.